A 402-amino-acid chain; its full sequence is Putative FBD-associated F-box protein At5g56690 (402 aa).

The F-box domain maps to 1–47; it reads MAEISGLPDDLLVKILAFLPTKVAISTSVLSKQWRFLWMWLPKLKYD. The region spanning 349–401 is the FBD domain; sequence SWSKNQGSVPKCFLNSLETFRVKWYYSEEQEDRDFLSLIFKHARCLKSTSILH.

The polypeptide is Putative FBD-associated F-box protein At5g56690 (Arabidopsis thaliana (Mouse-ear cress)).